A 161-amino-acid polypeptide reads, in one-letter code: Endoribonuclease YbeY (161 aa).

Zn(2+) contacts are provided by His-120, His-124, and Asp-130.

This sequence belongs to the endoribonuclease YbeY family. It depends on Zn(2+) as a cofactor.

It localises to the cytoplasm. Functionally, single strand-specific metallo-endoribonuclease involved in late-stage 70S ribosome quality control and in maturation of the 3' terminus of the 16S rRNA. This Chlamydia muridarum (strain MoPn / Nigg) protein is Endoribonuclease YbeY.